The sequence spans 156 residues: V-type proton ATPase 16 kDa proteolipid subunit c (156 aa).

At 1 to 7 (MAENPIY) the chain is on the lumenal side. A helical membrane pass occupies residues 8–30 (GPFFGVMGAASAIIFSALGAAYG). The Cytoplasmic portion of the chain corresponds to 31-52 (TAKSGTGIAAMSVMRPELIMKS). The helical transmembrane segment at 53 to 73 (IIPVVMAGIIAIYGLVVAVLI) threads the bilayer. The Lumenal segment spans residues 74 to 92 (AGSLDSPSNNYTLYRGFIH). Residues 93–114 (LGAGLAVGFSGLAAGFAIGIVG) form a helical membrane-spanning segment. At 115 to 126 (DAGVRGTAQQPR) the chain is on the cytoplasmic side. Residues 127–152 (LFVGMILILIFAEVLGLYGLIVAIYL) traverse the membrane as a helical segment. Topologically, residues 153–156 (YTKQ) are lumenal.

This sequence belongs to the V-ATPase proteolipid subunit family. In terms of assembly, V-ATPase is a heteromultimeric enzyme made up of two complexes: the ATP-hydrolytic V1 complex and the proton translocation V0 complex. The V1 complex consists of three catalytic AB heterodimers that form a heterohexamer, three peripheral stalks each consisting of EG heterodimers, one central rotor including subunits D and F, and the regulatory subunits C and H. The proton translocation complex V0 consists of the proton transport subunit a, a ring of proteolipid subunits c9c'', rotary subunit d, subunits e and f, and the accessory subunits VhaAC45 and ATP6AP2.

The protein resides in the membrane. Proton-conducting pore forming subunit of the V0 complex of vacuolar(H+)-ATPase (V-ATPase), a multisubunit enzyme composed of a peripheral complex (V1) that hydrolyzes ATP and a membrane integral complex (V0) that translocates protons. V-ATPase is responsible for acidifying and maintaining the pH of intracellular compartments and in some cell types, is targeted to the plasma membrane, where it is responsible for acidifying the extracellular environment. This chain is V-type proton ATPase 16 kDa proteolipid subunit c (VHA16), found in Manduca sexta (Tobacco hawkmoth).